A 609-amino-acid polypeptide reads, in one-letter code: PTS system beta-glucoside-specific EIIBCA component (609 aa).

The region spanning 1–86 is the PTS EIIB type-1 domain; it reads MDYDKLSKDI…VRHSNLSDEK (86 aa). C26 acts as the Phosphocysteine intermediate; for EIIB activity in catalysis. Positions 103-459 constitute a PTS EIIC type-1 domain; sequence DVISGVFTPI…GSQQPAVHEG (357 aa). The next 10 helical transmembrane spans lie at 112-132, 141-161, 174-194, 202-222, 246-266, 281-301, 321-341, 351-371, 379-399, and 412-432; these read ILPA…AVTF, VHVI…LLLA, VAAA…LGAG, LPVT…SIWI, FTLL…GAIL, AGLV…MTGM, LLPA…AVFL, LALT…MYGV, FAAA…TGVA, and IPVF…IAFA. One can recognise a PTS EIIA type-1 domain in the interval 480-584; the sequence is DGVFSAGVMG…DVITPVIVTN (105 aa). H532 functions as the Tele-phosphohistidine intermediate; for EIIA activity in the catalytic mechanism.

Its subcellular location is the cell membrane. Functionally, the phosphoenolpyruvate-dependent sugar phosphotransferase system (sugar PTS), a major carbohydrate active -transport system, catalyzes the phosphorylation of incoming sugar substrates concomitantly with their translocation across the cell membrane. This system is involved in beta-glucoside transport. In Bacillus subtilis (strain 168), this protein is PTS system beta-glucoside-specific EIIBCA component (bglP).